The primary structure comprises 354 residues: Uroporphyrinogen decarboxylase (354 aa).

Residues 27 to 31, D77, Y154, T209, and H327 contribute to the substrate site; that span reads RQAGR.

This sequence belongs to the uroporphyrinogen decarboxylase family. Homodimer.

Its subcellular location is the cytoplasm. It catalyses the reaction uroporphyrinogen III + 4 H(+) = coproporphyrinogen III + 4 CO2. It participates in porphyrin-containing compound metabolism; protoporphyrin-IX biosynthesis; coproporphyrinogen-III from 5-aminolevulinate: step 4/4. Its function is as follows. Catalyzes the decarboxylation of four acetate groups of uroporphyrinogen-III to yield coproporphyrinogen-III. In Klebsiella pneumoniae subsp. pneumoniae (strain ATCC 700721 / MGH 78578), this protein is Uroporphyrinogen decarboxylase.